The primary structure comprises 356 residues: MSNSTSTPNTGLSYKDAGVDIEAGDALVDRIKSVAKRTTRPEVMGGLGGFGALCKIPKGYEEPVLVSGTDGVGTKLRLALNLNRHDTIGQDLVAMCVNDLLVCGAEPLFFLDYYATGHLNVDVAANVVTGIGKGCELAGCALVGGETAEMPGMYEGEDYDLAGFAVGVVEQSKIIDGSKVKSGDVLIGVASSGAHSNGYSLLRKILDVKNVDLTQVIDGRPLADVAMEPTRIYVKPVLELCKQVDVHAMAHITGGGLPGNLPRVLPNGAQAVINEASWEWPELFKLLQREGNVERFEMYRTFNCGVGMVIAVDANDAEKAIEVLNAQGEKAWKIGHIQENAESVEGADEKIRVIFE.

It belongs to the AIR synthase family.

It is found in the cytoplasm. The enzyme catalyses 2-formamido-N(1)-(5-O-phospho-beta-D-ribosyl)acetamidine + ATP = 5-amino-1-(5-phospho-beta-D-ribosyl)imidazole + ADP + phosphate + H(+). It participates in purine metabolism; IMP biosynthesis via de novo pathway; 5-amino-1-(5-phospho-D-ribosyl)imidazole from N(2)-formyl-N(1)-(5-phospho-D-ribosyl)glycinamide: step 2/2. The sequence is that of Phosphoribosylformylglycinamidine cyclo-ligase from Acinetobacter baumannii (strain AB307-0294).